We begin with the raw amino-acid sequence, 42 residues long: Alpha-lactalbumin I (42 aa).

The C-type lysozyme domain maps to 1–42 (IDYRKCQASQILKEHGMDKVIPLPELVCTMFHISGLSPQAEV).

It belongs to the glycosyl hydrolase 22 family. Lactose synthase (LS) is a heterodimer of a catalytic component, beta1,4-galactosyltransferase (beta4Gal-T1) and a regulatory component, alpha-lactalbumin (LA). In terms of tissue distribution, mammary gland specific. Secreted in milk.

Its subcellular location is the secreted. In terms of biological role, regulatory subunit of lactose synthase, changes the substrate specificity of galactosyltransferase in the mammary gland making glucose a good acceptor substrate for this enzyme. This enables LS to synthesize lactose, the major carbohydrate component of milk. In other tissues, galactosyltransferase transfers galactose onto the N-acetylglucosamine of the oligosaccharide chains in glycoproteins. The polypeptide is Alpha-lactalbumin I (LALBA) (Macropus giganteus (Eastern gray kangaroo)).